Here is an 800-residue protein sequence, read N- to C-terminus: Mitogen-activated protein kinase kinase kinase 20 (800 aa).

The residue at position 2 (Ser-2) is an N-acetylserine. Phosphoserine; by autocatalysis occurs at positions 2, 3, and 7. The region spanning 16–277 is the Protein kinase domain; the sequence is LQFFENCGGG…SLPDKCNSFL (262 aa). Residues 22–30 and Lys-45 contribute to the ATP site; that span reads CGGGSFGSV. Asp-133 (proton acceptor) is an active-site residue. A Phosphothreonine; by autocatalysis modification is found at Thr-161. Residue Ser-165 is modified to Phosphoserine; by autocatalysis. Ser-275 is modified (phosphoserine). Residues 287–308 form a leucine-zipper region; sequence IEATLERLKKLERDLSFKEQEL. The residue at position 302 (Ser-302) is a Phosphoserine; by autocatalysis. Phosphoserine is present on residues Trp-339, Glu-429, Lys-434, Asp-454, and Ser-567. Positions 339–410 constitute an SAM domain; it reads WTEDDVYCWV…KSAIEKLTHD (72 aa). Phosphothreonine; by autocatalysis is present on Thr-586. Residue Ser-587 is modified to Phosphoserine; by autocatalysis. Residues Ser-593 and Ser-599 each carry the phosphoserine modification. Thr-628 is modified (phosphothreonine). A phosphoserine mark is found at Ser-633, Ser-637, and Ser-648. Phosphoserine; by autocatalysis occurs at positions 649 and 660. A compositionally biased stretch (polar residues) spans 652–666; sequence LNSRDSGFSSGNTDT. Residues 652-800 form a disordered region; it reads LNSRDSGFSS…RGDHRGWRNF (149 aa). The residue at position 664 (Thr-664) is a Phosphothreonine; by autocatalysis. Residues 667–678 show a composition bias toward basic and acidic residues; sequence SSERGRYSDRSR. The tract at residues 670-713 is sensing domain (S); it reads RGRYSDRSRNKYGRGSISLNSSPRGRYSGKSQHSTPSRGRYPGK. Ser-685 is modified (phosphoserine). 2 stretches are compositionally biased toward polar residues: residues 686-706 and 717-726; these read ISLN…STPS and VSQSALNPHQ. 2 positions are modified to phosphoserine; by autocatalysis: Ser-718 and Ser-720. Ser-727 and Ser-733 each carry phosphoserine. Over residues 728-738 the composition is skewed to basic and acidic residues; sequence PDFKRSPRDLH. Thr-742 is subject to Phosphothreonine; by autocatalysis. Composition is skewed to basic and acidic residues over residues 750–763 and 785–800; these read PETD…DSKV and TNKE…WRNF. Residues 774-800 are C-terminal domain (CTD); it reads RKKPHRPSPAKTNKERARGDHRGWRNF.

This sequence belongs to the protein kinase superfamily. STE Ser/Thr protein kinase family. MAP kinase kinase kinase subfamily. Homodimer. Interacts with ZNF33A. Component of a signaling complex containing at least AKAP13, PKN1, MAPK14, MAP3K20 and MAP2K3. Within this complex, AKAP13 interacts directly with PKN1, which in turn recruits MAPK14, MAP2K3 and MAP3K20. Interacts with EIF2AK4/GCN2; promoting EIF2AK4/GCN2 kinase activity. As to quaternary structure, interacts with isoform ZAKbeta. In terms of assembly, interacts with isoform ZAKalpha. The cofactor is Mg(2+). Activated by phosphorylation by PKN1, followed by autophosphorylation on Thr-161 and Ser-165. Autophosphorylation in response to ribotoxic stress promotes dissociation from colliding ribosomes and activation. Ubiquitously expressed. Isoform ZAKbeta is the predominant form in all tissues examined, except for liver, in which isoform ZAKalpha is more highly expressed.

Its subcellular location is the cytoplasm. The protein resides in the nucleus. It carries out the reaction L-seryl-[protein] + ATP = O-phospho-L-seryl-[protein] + ADP + H(+). The catalysed reaction is L-threonyl-[protein] + ATP = O-phospho-L-threonyl-[protein] + ADP + H(+). With respect to regulation, activated in response to stress, such as ribosomal stress, osmotic shock and ionizing radiation. Activated by phosphorylation by PKN1, followed by autophosphorylation on Thr-161 and Ser-165. Inhibited by nilotinib, sorafenib, dabrafenib, rebastinib and vemurafenib. Selectively inhibited by N-(3)-((1H-Pyrazolo[3,4-b]pyridin-5-yl)ethynyl)benzenesulfonamide compound 3h. Selectively inhibited by 1,2,3-triazole benzenesulfonamides. In terms of biological role, stress-activated component of a protein kinase signal transduction cascade that promotes programmed cell death in response to various stress, such as ribosomal stress, osmotic shock and ionizing radiation. Acts by catalyzing phosphorylation of MAP kinase kinases, leading to activation of the JNK (MAPK8/JNK1, MAPK9/JNK2 and/or MAPK10/JNK3) and MAP kinase p38 (MAPK11, MAPK12, MAPK13 and/or MAPK14) pathways. Activates JNK through phosphorylation of MAP2K4/MKK4 and MAP2K7/MKK7, and MAP kinase p38 gamma (MAPK12) via phosphorylation of MAP2K3/MKK3 and MAP2K6/MKK6. Involved in stress associated with adrenergic stimulation: contributes to cardiac decompensation during periods of acute cardiac stress. May be involved in regulation of S and G2 cell cycle checkpoint by mediating phosphorylation of CHEK2. Its function is as follows. Key component of the stress-activated protein kinase signaling cascade in response to ribotoxic stress or UV-B irradiation. Acts as the proximal sensor of ribosome collisions during the ribotoxic stress response (RSR): directly binds to the ribosome by inserting its flexible C-terminus into the ribosomal intersubunit space, thereby acting as a sentinel for colliding ribosomes. Upon ribosome collisions, activates either the stress-activated protein kinase signal transduction cascade or the integrated stress response (ISR), leading to programmed cell death or cell survival, respectively. Dangerous levels of ribosome collisions trigger the autophosphorylation and activation of MAP3K20, which dissociates from colliding ribosomes and phosphorylates MAP kinase kinases, leading to activation of the JNK and MAP kinase p38 pathways that promote programmed cell death. Less dangerous levels of ribosome collisions trigger the integrated stress response (ISR): MAP3K20 activates EIF2AK4/GCN2 independently of its protein-kinase activity, promoting EIF2AK4/GCN2-mediated phosphorylation of EIF2S1/eIF-2-alpha. Also part of the stress-activated protein kinase signaling cascade triggering the NLRP1 inflammasome in response to UV-B irradiation: ribosome collisions activate MAP3K20, which directly phosphorylates NLRP1, leading to activation of the NLRP1 inflammasome and subsequent pyroptosis. NLRP1 is also phosphorylated by MAP kinase p38 downstream of MAP3K20. Also acts as a histone kinase by phosphorylating histone H3 at 'Ser-28' (H3S28ph). Functionally, isoform that lacks the C-terminal region that mediates ribosome-binding: does not act as a sensor of ribosome collisions in response to ribotoxic stress. May act as an antagonist of isoform ZAKalpha: interacts with isoform ZAKalpha, leading to decrease the expression of isoform ZAKalpha. This chain is Mitogen-activated protein kinase kinase kinase 20, found in Homo sapiens (Human).